Consider the following 217-residue polypeptide: Mucosal pentraxin (217 aa).

The N-terminal stretch at 1-19 is a signal peptide; that stretch reads MEKLLLGVLLLAFLPEGMT. Residues 24–217 form the Pentraxin (PTX) domain; sequence RGKVFIFPEQ…KGYVVVKPKL (194 aa). Cys-55 and Cys-114 are joined by a disulfide. Residues Asp-77, Asn-78, Glu-155, Gln-156, Asp-157, and Gln-167 each coordinate Ca(2+).

Belongs to the pentraxin family. As to quaternary structure, homopentamer. Pentraxin (or pentaxin) have a discoid arrangement of 5 non-covalently bound subunits. Ca(2+) is required as a cofactor.

The protein localises to the secreted. This Bos taurus (Bovine) protein is Mucosal pentraxin (MPTX).